A 242-amino-acid polypeptide reads, in one-letter code: NAD(P)H-quinone oxidoreductase subunit K (242 aa).

C60, C61, C125, and C156 together coordinate [4Fe-4S] cluster.

It belongs to the complex I 20 kDa subunit family. In terms of assembly, NDH-1 can be composed of about 15 different subunits; different subcomplexes with different compositions have been identified which probably have different functions. The cofactor is [4Fe-4S] cluster.

It localises to the cellular thylakoid membrane. It catalyses the reaction a plastoquinone + NADH + (n+1) H(+)(in) = a plastoquinol + NAD(+) + n H(+)(out). The catalysed reaction is a plastoquinone + NADPH + (n+1) H(+)(in) = a plastoquinol + NADP(+) + n H(+)(out). Its function is as follows. NDH-1 shuttles electrons from an unknown electron donor, via FMN and iron-sulfur (Fe-S) centers, to quinones in the respiratory and/or the photosynthetic chain. The immediate electron acceptor for the enzyme in this species is believed to be plastoquinone. Couples the redox reaction to proton translocation, and thus conserves the redox energy in a proton gradient. Cyanobacterial NDH-1 also plays a role in inorganic carbon-concentration. The polypeptide is NAD(P)H-quinone oxidoreductase subunit K (Prochlorococcus marinus (strain SARG / CCMP1375 / SS120)).